The sequence spans 262 residues: MSFLELTEVWGKPQKDIFFPSGSEVEESTDAPIQRTVQPIVTGSSVLALKFADGVMIAADNLASYGSLARFYDVERLTKVGDNTIVGAGGDISDYQQIQRLLEKLEIKEGNYGDGYALQPSYIHEYLSKVLYARRNKLDPYWNQLIVAGVDGENKEPYVAFADLRGTTYSAPAIATGFAMHLALPMLRKATDDDRWKTLSKESARATIDECMRVLFYRDARSLNKFSVATITPEGIEFQTDQSVSSKWAFAEKQYGYGTQTV.

Belongs to the peptidase T1B family. The 26S proteasome consists of a 20S proteasome core and two 19S regulatory subunits. The 20S proteasome core is composed of 28 subunits that are arranged in four stacked rings, resulting in a barrel-shaped structure. The two end rings are each formed by seven alpha subunits, and the two central rings are each formed by seven beta subunits. The catalytic chamber with the active sites is on the inside of the barrel.

The protein localises to the cytoplasm. The protein resides in the nucleus. Its function is as follows. Non-catalytic component of the proteasome, a multicatalytic proteinase complex which is characterized by its ability to cleave peptides with Arg, Phe, Tyr, Leu, and Glu adjacent to the leaving group at neutral or slightly basic pH. The proteasome has an ATP-dependent proteolytic activity. This Schizosaccharomyces pombe (strain 972 / ATCC 24843) (Fission yeast) protein is Probable proteasome subunit beta type-7.